Here is a 796-residue protein sequence, read N- to C-terminus: Fibroblast growth factor receptor 3 (796 aa).

The signal sequence occupies residues 1 to 19 (MLVWLCGLCLVTLAGGRSA). The Extracellular segment spans residues 20–358 (ARLPLTEGRP…AEPVPDVDTS (339 aa)). The Ig-like C2-type 1 domain maps to 21–119 (RLPLTEGRPT…VLRNVTVRVT (99 aa)). Cysteine 56 and cysteine 102 are joined by a disulfide. Residues asparagine 91 and asparagine 113 are each glycosylated (N-linked (GlcNAc...) asparagine). The segment at 117 to 142 (RVTDSPSSGDDEDDDEESESANAPKF) is disordered. The segment covering 125–135 (GDDEDDDEESE) has biased composition (acidic residues). Ig-like C2-type domains are found at residues 140 to 233 (PKFT…YTLD) and 239 to 344 (PHRP…AWLT). A disulfide bond links cysteine 165 and cysteine 217. Residues asparagine 214, asparagine 251, asparagine 283, asparagine 304, and asparagine 317 are each glycosylated (N-linked (GlcNAc...) asparagine). Cysteine 264 and cysteine 328 are joined by a disulfide. The chain crosses the membrane as a helical span at residues 359-379 (VSILAAAGCVAVVILVVIIIF). Over 380–796 (TYKMKMPSKK…HQQYNGVIRT (417 aa)) the chain is Cytoplasmic. One can recognise a Protein kinase domain in the interval 457–746 (LTLGKPLGEG…LTVTSTDEYL (290 aa)). Residues 463 to 471 (LGEGCFGQV) and lysine 493 each bind ATP. Aspartate 602 serves as the catalytic Proton acceptor. A phosphotyrosine; by autocatalysis mark is found at tyrosine 632, tyrosine 633, tyrosine 709, and tyrosine 745.

This sequence belongs to the protein kinase superfamily. Tyr protein kinase family. Fibroblast growth factor receptor subfamily. Monomer. Homodimer after ligand binding. Post-translationally, autophosphorylated. Binding of FGF family members together with heparan sulfate proteoglycan or heparin promotes receptor dimerization and autophosphorylation on tyrosine residues. Autophosphorylation occurs in trans between the two FGFR molecules present in the dimer. In terms of tissue distribution, undetectable in the adult skeletal muscle. Low levels of expression were detected in the liver, lung and kidney. Medium levels of expression were detected in the heart, spleen, intestine and eye. Highest expression is observed in the testis.

The protein localises to the cell membrane. It catalyses the reaction L-tyrosyl-[protein] + ATP = O-phospho-L-tyrosyl-[protein] + ADP + H(+). With respect to regulation, present in an inactive conformation in the absence of bound ligand. Ligand binding leads to dimerization and activation by autophosphorylation on tyrosine residues. Tyrosine-protein kinase that acts as a cell-surface receptor for fibroblast growth factors and plays an essential role in the regulation of cell proliferation, differentiation and apoptosis. Plays an essential role in the regulation of chondrocyte differentiation, proliferation and apoptosis, and is required for normal skeleton development. Regulates both osteogenesis and postnatal bone mineralization by osteoblasts. Promotes apoptosis in chondrocytes, but can also promote cancer cell proliferation. Phosphorylates PLCG1, CBL and FRS2. Ligand binding leads to the activation of several signaling cascades. Activation of PLCG1 leads to the production of the cellular signaling molecules diacylglycerol and inositol 1,4,5-trisphosphate. Phosphorylation of FRS2 triggers recruitment of GRB2, GAB1, PIK3R1 and SOS1, and mediates activation of RAS, MAPK1/ERK2, MAPK3/ERK1 and the MAP kinase signaling pathway, as well as of the AKT1 signaling pathway. This chain is Fibroblast growth factor receptor 3 (FGFR3), found in Pleurodeles waltl (Iberian ribbed newt).